A 241-amino-acid polypeptide reads, in one-letter code: Sugar fermentation stimulation protein homolog (241 aa).

Belongs to the SfsA family.

This Nostoc punctiforme (strain ATCC 29133 / PCC 73102) protein is Sugar fermentation stimulation protein homolog.